Reading from the N-terminus, the 826-residue chain is Lon protease (826 aa).

The Lon N-terminal domain maps to 26 to 221 (LPMLPVRDVV…AVNGFVSREV (196 aa)). 373–380 (GPPGVGKT) is an ATP binding site. The Lon proteolytic domain maps to 609-790 (EPQIGLATGL…NEVLEKALLP (182 aa)). Catalysis depends on residues serine 696 and lysine 739. Positions 788–826 (LLPAEKKKAPPKKKPPKKAAKPKAKKTQPKAKTTEAADK) are disordered. The segment covering 796–816 (APPKKKPPKKAAKPKAKKTQP) has biased composition (basic residues).

The protein belongs to the peptidase S16 family. Homohexamer. Organized in a ring with a central cavity.

The protein resides in the cytoplasm. It catalyses the reaction Hydrolysis of proteins in presence of ATP.. In terms of biological role, ATP-dependent serine protease that mediates the selective degradation of mutant and abnormal proteins as well as certain short-lived regulatory proteins. Required for cellular homeostasis and for survival from DNA damage and developmental changes induced by stress. Degrades polypeptides processively to yield small peptide fragments that are 5 to 10 amino acids long. Binds to DNA in a double-stranded, site-specific manner. The protein is Lon protease of Desulfatibacillum aliphaticivorans.